The chain runs to 92 residues: RIIa domain-containing protein 1 (92 aa).

Residues 43–77 form the RIIa domain; that stretch reads KEVEWLISGFFREIFLKRPDNILEFAADYFTDPRL.

This is RIIa domain-containing protein 1 (RIIAD1) from Homo sapiens (Human).